An 851-amino-acid polypeptide reads, in one-letter code: DNA mismatch repair protein MutS (851 aa).

602–609 contributes to the ATP binding site; it reads GPNMSGKS.

It belongs to the DNA mismatch repair MutS family.

In terms of biological role, this protein is involved in the repair of mismatches in DNA. It is possible that it carries out the mismatch recognition step. This protein has a weak ATPase activity. This is DNA mismatch repair protein MutS from Streptococcus pyogenes serotype M4 (strain MGAS10750).